The primary structure comprises 374 residues: Probable quinol oxidase subunit 2 (374 aa).

The signal sequence occupies residues 1–19 (MSKFKSLLLMFGTLILLSG). Residue C20 is the site of N-palmitoyl cysteine attachment. Residue C20 is the site of S-diacylglycerol cysteine attachment. A run of 2 helical transmembrane segments spans residues 43 to 63 (SIIFMLVIVAVVLTMFAIFIF) and 82 to 102 (IETIWFVVPIIIVIALSIPTV). The segment at 321 to 374 (MKPMILGNNDPYDNEFKKEEDHNSKEMEKISKSAKDENASKFGSKADNDHGGGH) is disordered. Positions 334 to 374 (NEFKKEEDHNSKEMEKISKSAKDENASKFGSKADNDHGGGH) are enriched in basic and acidic residues.

The protein belongs to the cytochrome c oxidase subunit 2 family.

The protein resides in the cell membrane. It catalyses the reaction 2 a quinol + O2 = 2 a quinone + 2 H2O. In terms of biological role, catalyzes quinol oxidation with the concomitant reduction of oxygen to water. Subunit II transfers the electrons from a quinol to the binuclear center of the catalytic subunit I. In Staphylococcus haemolyticus (strain JCSC1435), this protein is Probable quinol oxidase subunit 2 (qoxA).